Reading from the N-terminus, the 147-residue chain is Hemoglobin subunit epsilon-Y2 (147 aa).

The region spanning 3-147 (NFTAEEKTLI…VATALSHKYH (145 aa)) is the Globin domain. Residue Ser-51 is modified to Phosphoserine. 2 residues coordinate heme b: His-64 and His-93.

It belongs to the globin family. In terms of tissue distribution, high expression in yolk sac blood islands, fetal liver, and embryonic erythrocytes. Very low levels in adult liver and spleen.

Hemoglobin epsilon chain is a beta-type chain found in early embryos. This Mus musculus (Mouse) protein is Hemoglobin subunit epsilon-Y2 (Hbb-y).